The chain runs to 238 residues: Ribose-5-phosphate isomerase A (238 aa).

Substrate contacts are provided by residues 30–33 (SGST), 87–90 (DGAD), and 100–103 (KGGG). Glu109 functions as the Proton acceptor in the catalytic mechanism. Lys127 lines the substrate pocket.

It belongs to the ribose 5-phosphate isomerase family. Homodimer.

It catalyses the reaction aldehydo-D-ribose 5-phosphate = D-ribulose 5-phosphate. It participates in carbohydrate degradation; pentose phosphate pathway; D-ribose 5-phosphate from D-ribulose 5-phosphate (non-oxidative stage): step 1/1. Catalyzes the reversible conversion of ribose-5-phosphate to ribulose 5-phosphate. The polypeptide is Ribose-5-phosphate isomerase A (Synechococcus sp. (strain CC9311)).